We begin with the raw amino-acid sequence, 326 residues long: Olfactory receptor 10X1 (326 aa).

Residues 1–41 (MVLNVYCCFFQISDIQTMKINQTILKEFILVGFSVYPHVQT) lie on the Extracellular side of the membrane. A glycan (N-linked (GlcNAc...) asparagine) is linked at Asn-21. A helical transmembrane segment spans residues 42 to 62 (FLFVVFFCLYLLTLAGNLIIM). Topologically, residues 63-70 (GLTWVDRS) are cytoplasmic. The chain crosses the membrane as a helical span at residues 71–91 (LHTPMYLFLSALSFSETCYTL). At 92–115 (TIVPKMLEDLLAKDRSISVTGCSL) the chain is on the extracellular side. A disulfide bond links Cys-113 and Cys-205. The chain crosses the membrane as a helical span at residues 116–136 (QMCFFLGLGGTNCIILTLMGY). The Cytoplasmic segment spans residues 137–155 (DRFLAICNPLRYPLLMTNI). Residues 156–176 (VCGQLVASACTAGFFISLTET) form a helical membrane-spanning segment. Over 177-213 (ALIFRDSFCRPNLVKHFFCHMLAVIRLSCIDSNHTEF) the chain is Extracellular. N-linked (GlcNAc...) asparagine glycosylation is present at Asn-209. The helical transmembrane segment at 214 to 233 (IITLISVSGLLGTLLLIILT) threads the bilayer. The Cytoplasmic portion of the chain corresponds to 234–253 (DVFIISTVLRIPSAEGKQKA). Residues 254-274 (FTTCASHLTVVIIHFGFASIV) traverse the membrane as a helical segment. At 275-284 (YLKPEASGDD) the chain is on the extracellular side. The helical transmembrane segment at 285 to 305 (TLIAVPYTVITPFLSPIIFSL) threads the bilayer. Over 306-326 (RNKDMKNAFRRMMGNTVALKK) the chain is Cytoplasmic.

It belongs to the G-protein coupled receptor 1 family.

It localises to the cell membrane. Its function is as follows. Odorant receptor. This chain is Olfactory receptor 10X1 (OR10X1), found in Homo sapiens (Human).